Consider the following 502-residue polypeptide: MSTDFILAVDQGTTSSRAIIFDKKGNIRKIAQKEFTQIYPKSGWVEHDAMEIWGTQSGVMREALEFGRVKPDQIAAIGITNQRETVVVWDKETGDPVYNAIVWQCRRTSSICDEIKRDPQFVKYIKENTGLVVDAYFSGTKVKWILDNVEGAREKANAGKLLMGTIDTWLIWNLTRGKVHATDYSNASRTMLFNINSLEWDKKILDYLNIPESMLPEVKNSSEVFGVTDSHTLGGAEIPIAGVAGDQHAALFGHCCFEKGMAKNTYGTGCFALMNVGDKPVYSDEGLLTTIAWAENGKPTYALEGSVFIAGAVIQWIRDGLGLVRSAEDSEYYATKIDSTNGVYLVPAFVGLGTPYWDMYARGTIVGITRDTKREHIIRAALEAIAYQAKDVLECMKEDTGLDLAGLRVDGGAVQNNFLMQFQSDILQSEISKPKINEITGLGAVFLAGLAVGFWKDKQELKSILTTEKVFEPQKDSQAVAHDYRGWKKAVERSKAWAECYS.

T13 provides a ligand contact to ADP. Residues T13, T14, and S15 each contribute to the ATP site. Residue T13 participates in sn-glycerol 3-phosphate binding. R17 serves as a coordination point for ADP. Sn-glycerol 3-phosphate contacts are provided by R83, E84, Y136, and D246. Positions 83, 84, 136, 246, and 247 each coordinate glycerol. T268 and G311 together coordinate ADP. The ATP site is built by T268, G311, Q315, and G412. ADP is bound by residues G412 and N416.

Belongs to the FGGY kinase family.

It catalyses the reaction glycerol + ATP = sn-glycerol 3-phosphate + ADP + H(+). It functions in the pathway polyol metabolism; glycerol degradation via glycerol kinase pathway; sn-glycerol 3-phosphate from glycerol: step 1/1. Inhibited by fructose 1,6-bisphosphate (FBP). In terms of biological role, key enzyme in the regulation of glycerol uptake and metabolism. Catalyzes the phosphorylation of glycerol to yield sn-glycerol 3-phosphate. The protein is Glycerol kinase of Francisella tularensis subsp. tularensis (strain WY96-3418).